A 469-amino-acid chain; its full sequence is MAPPHFLLVTFPAQGHVNPSLRFARRLIKRTGARVTFVTCVSVFHNSMIANHNKVENLSFLTFSDGFDDGGISTYEDRQKRSVNLKVNGDKALSDFIEATKNGDSPVTCLIYTILLNWAPKVARRFQLPSALLWIQPALVFNIYYTHFMGNKSVFELPNLSSLEIRDLPSFLTPSNTNKGAYDAFQEMMEFLIKETKPKILINTFDSLEPEALTAFPNIDMVAVGPLLPTEIFSGSTNKSVKDQSSSYTLWLDSKTESSVIYVSFGTMVELSKKQIEELARALIEGKRPFLWVITDKSNRETKTEGEEETEIEKIAGFRHELEEVGMIVSWCSQIEVLSHRAVGCFVTHCGWSSTLESLVLGVPVVAFPMWSDQPTNAKLLEESWKTGVRVRENKDGLVERGEIRRCLEAVMEEKSVELRENAKKWKRLAMEAGREGGSSDKNMEAFVEDICGESLIQNLCEAEEVKVK.

H16 serves as the catalytic Proton acceptor. H16 is an an anthocyanidin binding site. UDP-alpha-D-glucose is bound by residues Q334, H349, W352, S354, E357, D373, and Q374.

Belongs to the UDP-glycosyltransferase family. As to quaternary structure, interacts with CALS1, ROP1 and phragmoplastin.

It localises to the cytoplasm. It is found in the perinuclear region. The protein localises to the cytoskeleton. Its subcellular location is the phragmoplast. The enzyme catalyses (indol-3-yl)acetate + UDP-alpha-D-glucose = 1-O-(indol-3-ylacetyl)-beta-D-glucose + UDP. It functions in the pathway plant hormone metabolism; auxin conjugation. Possesses low catalytic activity on indole-3-acetic acid (IAA) in vitro. May transfer UDP-glucose from sucrose synthase to callose synthase for the synthesis of callose at the forming cell plate during cytokinesis. Has high affinity for 4-aminobenzoate. Catalyzes the formation of 4-aminobenzoate glucose ester which represents a storage form of 4-aminobenzoate in the vacuole. Is the major source of this activity in the plant. Also active in vitro on benzoates and benzoate derivatives. This is UDP-glycosyltransferase 75B1 (UGT75B1) from Arabidopsis thaliana (Mouse-ear cress).